The following is a 729-amino-acid chain: MFSALKKLVGSDQAPGRDKNIPAGLQSMNQALQRRFAKGVQYNMKIVIRGDRNTGKTALWHRLQGRPFVEEYIPTQEIQVTSIHWSYKTTDDIVKVEVWDVVDKGKCKKRGDGLKMENDPQEAESEMALDAEFLDVYKNCNGVVMMFDITKQWTFNYILRELPKVPTHVPVCVLGNYRDMGEHRVILPDDVRDFIDNLDRPPGSSYFRYAESSMKNSFGLKYLHKFFNIPFLQLQRETLLRQLETNQLDMDATLEELSVQQETEDQNYGIFLEMMEARSRGHASPLAANGQSPSPGSQSPVVPAGAVSTGSSSPGTPQPAPQLPLNAAPPSSVPPVPPSEALPPPACPSAPAPRRSIISRLFGTSPATEAAPPPPEPVPAAEGPATVQSVEDFVPDDRLDRSFLEDTTPARDEKKVGAKAAQQDSDSDGEALGGNPMVAGFQDDVDLEDQPRGSPPLPAGPVPSQDITLSSEEEAEVAAPTKGPAPAPQQCSEPETKWSSIPASKPRRGTAPTRTAAPPWPGGVSVRTGPEKRSSTRPPAEMEPGKGEQASSSESDPEGPIAAQMLSFVMDDPDFESEGSDTQRRADDFPVRDDPSDVTDEDEGPAEPPPPPKLPLPAFRLKNDSDLFGLGLEEAGPKESSEEGKEGKTPSKEKKKKKKKGKEEEEKAAKKKSKHKKSKDKEEGKEERRRRQQRPPRSRERTAADELEAFLGGGAPGGRHPGGGDYEEL.

Methionine 1 is modified (N-acetylmethionine). The small GTPase-like stretch occupies residues 39–279 (GVQYNMKIVI…IFLEMMEARS (241 aa)). Residues 50 to 57 (GDRNTGKT), 100 to 104 (DVVDK), and 177 to 179 (YRD) each bind GTP. The segment at 281 to 729 (GHASPLAANG…HPGGGDYEEL (449 aa)) is disordered. The segment covering 290-315 (GQSPSPGSQSPVVPAGAVSTGSSSPG) has biased composition (low complexity). A compositionally biased stretch (pro residues) spans 331-351 (SSVPPVPPSEALPPPACPSAP). Residues 395 to 416 (PDDRLDRSFLEDTTPARDEKKV) are compositionally biased toward basic and acidic residues. A phosphoserine mark is found at serine 402, serine 425, serine 427, serine 470, serine 471, serine 492, serine 525, and serine 577. The segment covering 489 to 502 (QQCSEPETKWSSIP) has biased composition (polar residues). Residues 581–595 (DTQRRADDFPVRDDP) show a composition bias toward basic and acidic residues. At serine 596 the chain carries Phosphoserine. Residues 596 to 605 (SDVTDEDEGP) are compositionally biased toward acidic residues. Phosphothreonine is present on threonine 599. The span at 606 to 615 (AEPPPPPKLP) shows a compositional bias: pro residues. Over residues 635 to 652 (AGPKESSEEGKEGKTPSK) the composition is skewed to basic and acidic residues. A phosphoserine mark is found at serine 640 and serine 641. The interval 655-693 (KKKKKKGKEEEEKAAKKKSKHKKSKDKEEGKEERRRRQQ) is interaction with CDKN2A. Over residues 669–678 (AKKKSKHKKS) the composition is skewed to basic residues. Over residues 679–689 (KDKEEGKEERR) the composition is skewed to basic and acidic residues. Residues 711–729 (LGGGAPGGRHPGGGDYEEL) are compositionally biased toward gly residues.

It belongs to the small GTPase superfamily. Rab family. Post-translationally, isoform 1 is O-glycosylated, while other isoforms are not.

Its subcellular location is the cytoplasm. The protein localises to the nucleus. Its function is as follows. May enhance cellular proliferation. May reduce growth inhibitory activity of CDKN2A. The chain is Rab-like protein 6 (RABL6) from Homo sapiens (Human).